The chain runs to 129 residues: Glutaredoxin-like protein ECU08_1380 (129 aa).

Residues 26 to 126 (EADYGEMVRR…PLLTQNREPV (101 aa)) form the Glutaredoxin domain.

The protein belongs to the glutaredoxin family.

It is found in the cytoplasm. Has a glutathione-disulfide oxidoreductase activity in the presence of NADPH and glutathione reductase. Reduces low molecular weight disulfides and proteins. This Encephalitozoon cuniculi (strain GB-M1) (Microsporidian parasite) protein is Glutaredoxin-like protein ECU08_1380.